A 546-amino-acid polypeptide reads, in one-letter code: MASSQQEQQACEIAPASRGNSNRIAALNLDGQSPPCIDDYDQQKPGWRKFLPYVGPGFLVSLAYLDPGNLETDLQAGANHGYELLWVILIGLIFALIIQSLAANLGVSTGRHLAELCKAEYPKYVRWSLWLLAEVAVIAADIPEVIGTAFALNILFHIPVWAGVLMTGLSTLLLLGLQKYGIRKLELLISALVFTMAACFFGELSYVKPPASGVLKGLFIPKLSGQGATGDAIALLGALVMPHNLFLHSALVLSRKVPNSVRGINDACRYFLIESGFALFVAFLINVSIISVSGTVCLAKNLSPENADQCGDLTLKGASFLLKNVLGKSSSTIYAIALLASGQSSTITGTYAGQYIMQGFLDLKMRKWLRNLTTRCIAILPSLFVSIIGGSSGASRLIIIASMILSFELPFALIPLLKFSSSNPKMGPHKNSIYIIVISWTLGFMIIGINVYYLSTGFVGWLTHNNLPKVGNVIIGIIVFPLMAIYILAIIYLTFRKDTAVTYIDPVKNDPNLEANMENGQGKSNQEMAFGRVPYREDLADVPLPE.

Transmembrane regions (helical) follow at residues 50–70 (FLPYVGPGFLVSLAYLDPGNL), 83–103 (ELLWVILIGLIFALIIQSLAA), 128–150 (SLWLLAEVAVIAADIPEVIGTAF), 154–176 (ILFHIPVWAGVLMTGLSTLLLLG), 187–207 (LLISALVFTMAACFFGELSYV), 233–253 (IALLGALVMPHNLFLHSALVL), 270–290 (YFLIESGFALFVAFLINVSII), and 333–353 (IYAIALLASGQSSTITGTYAG). Asparagine 371 carries N-linked (GlcNAc...) asparagine glycosylation. Helical transmembrane passes span 374–394 (TRCIAILPSLFVSIIGGSSGA), 397–417 (LIIIASMILSFELPFALIPLL), 433–453 (IYIIVISWTLGFMIIGINVYY), and 473–493 (VIIGIIVFPLMAIYILAIIYL).

It belongs to the NRAMP (TC 2.A.55) family.

It is found in the membrane. Functionally, probable divalent metal transporter. This chain is Metal transporter Nramp6.2, found in Populus trichocarpa (Western balsam poplar).